The following is a 396-amino-acid chain: Elongation factor Tu 1 (396 aa).

A tr-type G domain is found at 10–206 (KPHVNVGTIG…ALDTYIPTPK (197 aa)). The tract at residues 19–26 (GHVDHGKT) is G1. Position 19 to 26 (19 to 26 (GHVDHGKT)) interacts with GTP. A Mg(2+)-binding site is contributed by Thr-26. The segment at 60–64 (GITIS) is G2. The interval 81–84 (DCPG) is G3. GTP-binding positions include 81 to 85 (DCPGH) and 136 to 139 (NKAD). A G4 region spans residues 136-139 (NKAD). The interval 174–176 (SAL) is G5.

Belongs to the TRAFAC class translation factor GTPase superfamily. Classic translation factor GTPase family. EF-Tu/EF-1A subfamily. In terms of assembly, monomer.

Its subcellular location is the cytoplasm. It carries out the reaction GTP + H2O = GDP + phosphate + H(+). In terms of biological role, GTP hydrolase that promotes the GTP-dependent binding of aminoacyl-tRNA to the A-site of ribosomes during protein biosynthesis. This chain is Elongation factor Tu 1, found in Ruthia magnifica subsp. Calyptogena magnifica.